The following is a 395-amino-acid chain: Phosphoribulokinase, chloroplastic (395 aa).

A chloroplast-targeting transit peptide spans 1–46 (MAVSTIYSTQALNSTHFLTSSSSSKQVFLYRRQPQTNRRFNTLITC). A disulfide bond links Cys61 and Cys100.

It belongs to the phosphoribulokinase family.

Its subcellular location is the plastid. The protein localises to the chloroplast. It carries out the reaction D-ribulose 5-phosphate + ATP = D-ribulose 1,5-bisphosphate + ADP + H(+). The protein operates within carbohydrate biosynthesis; Calvin cycle. Its activity is regulated as follows. Light regulated via thioredoxin by reversible oxidation/reduction of sulfhydryl/disulfide groups. This Arabidopsis thaliana (Mouse-ear cress) protein is Phosphoribulokinase, chloroplastic.